The following is a 348-amino-acid chain: MKKWSRHLLAAGALALGMSAAHASDNDTLYFYNWTEYVPPGLLEQFTKETGIKVIYSTYESNETMYAKLKTYKDGAYDLVVPSTYYVDKMRKEGMIQKIDKSKLTNFHNLDPEMLNKPFDPNNDYSVPYIWGATAIGVNSDAIDPKTITSWADLWKPEYKNSLLLTDDAREVFQMALRKLGYSGNTTDPKEIEAAYEELKKLMPNVAAFNSDNPANPYMEGEVNLGMVWNGSAFVARQAGTPLEVVWPKEGGIFWMDSLAIPANAKNKEGALKLINFLLRPDVAKEVAETIGYPTPNLAARKLLSPEVANDKSLYPDAQTISKGEWQNDVGDASAIYEEYYQKLKAGR.

Residues 1–23 (MKKWSRHLLAAGALALGMSAAHA) form the signal peptide.

Belongs to the bacterial solute-binding protein PotD/PotF family.

The protein resides in the periplasm. Functionally, required for the activity of the bacterial periplasmic transport system of putrescine and spermidine. Polyamine binding protein. This is Spermidine/putrescine-binding periplasmic protein (potD) from Salmonella typhi.